The chain runs to 178 residues: Protamine-like protein (178 aa).

2 disordered regions span residues 1 to 27 (PSTT…TVSD) and 77 to 178 (SVVK…RAKK). Composition is skewed to basic residues over residues 8–21 (SPKR…RKRT) and 94–178 (PRRR…RAKK). The H15 domain occupies 21–89 (TGPTVSDLIL…KAKGFYKLNK (69 aa)).

In terms of tissue distribution, male germ cells.

The protein localises to the nucleus. It is found in the chromosome. Functionally, replaces histones in the chromatin of sperm during the haploid phase of spermatogenesis. Compacts sperm DNA into a highly condensed, stable and inactive complex. In Mullus surmuletus (Striped red mullet), this protein is Protamine-like protein.